Consider the following 159-residue polypeptide: Crossover junction endodeoxyribonuclease RuvC (159 aa).

Catalysis depends on residues D7, E67, and D139. Mg(2+) is bound by residues D7, E67, and D139.

Belongs to the RuvC family. Homodimer which binds Holliday junction (HJ) DNA. The HJ becomes 2-fold symmetrical on binding to RuvC with unstacked arms; it has a different conformation from HJ DNA in complex with RuvA. In the full resolvosome a probable DNA-RuvA(4)-RuvB(12)-RuvC(2) complex forms which resolves the HJ. Requires Mg(2+) as cofactor.

The protein resides in the cytoplasm. The catalysed reaction is Endonucleolytic cleavage at a junction such as a reciprocal single-stranded crossover between two homologous DNA duplexes (Holliday junction).. In terms of biological role, the RuvA-RuvB-RuvC complex processes Holliday junction (HJ) DNA during genetic recombination and DNA repair. Endonuclease that resolves HJ intermediates. Cleaves cruciform DNA by making single-stranded nicks across the HJ at symmetrical positions within the homologous arms, yielding a 5'-phosphate and a 3'-hydroxyl group; requires a central core of homology in the junction. The consensus cleavage sequence is 5'-(A/T)TT(C/G)-3'. Cleavage occurs on the 3'-side of the TT dinucleotide at the point of strand exchange. HJ branch migration catalyzed by RuvA-RuvB allows RuvC to scan DNA until it finds its consensus sequence, where it cleaves and resolves the cruciform DNA. The protein is Crossover junction endodeoxyribonuclease RuvC of Orientia tsutsugamushi (strain Boryong) (Rickettsia tsutsugamushi).